A 333-amino-acid chain; its full sequence is Cytochrome f (333 aa).

Positions 1 to 37 are cleaved as a signal peptide; it reads MRNSCKKARRTRPLKATIQALLVAIATMTFFFTSDIA. The Cytoplasmic segment spans residues 38 to 298; the sequence is LPQSAAAYPF…TEIVLQDPNR (261 aa). Residues Tyr45, Cys66, Cys69, and His70 each coordinate heme. The helical transmembrane segment at 299–319 threads the bilayer; the sequence is VKWMIAFICLVMLAQLMLILK. Residues 320–333 lie on the Lumenal, thylakoid side of the membrane; that stretch reads KKQVEKVQAAEMNF.

Belongs to the cytochrome f family. As to quaternary structure, the 4 large subunits of the cytochrome b6-f complex are cytochrome b6, subunit IV (17 kDa polypeptide, PetD), cytochrome f and the Rieske protein, while the 4 small subunits are PetG, PetL, PetM and PetN. The complex functions as a dimer. Heme is required as a cofactor.

The protein localises to the cellular thylakoid membrane. Its function is as follows. Component of the cytochrome b6-f complex, which mediates electron transfer between photosystem II (PSII) and photosystem I (PSI), cyclic electron flow around PSI, and state transitions. The chain is Cytochrome f (petA) from Mastigocladus laminosus (Fischerella sp.).